Reading from the N-terminus, the 435-residue chain is ATP-dependent protease ATPase subunit HslU (435 aa).

Residues Ile-18, 60-65, Asp-248, Glu-313, and Arg-385 contribute to the ATP site; that span reads GVGKTE.

It belongs to the ClpX chaperone family. HslU subfamily. A double ring-shaped homohexamer of HslV is capped on each side by a ring-shaped HslU homohexamer. The assembly of the HslU/HslV complex is dependent on binding of ATP.

It localises to the cytoplasm. Functionally, ATPase subunit of a proteasome-like degradation complex; this subunit has chaperone activity. The binding of ATP and its subsequent hydrolysis by HslU are essential for unfolding of protein substrates subsequently hydrolyzed by HslV. HslU recognizes the N-terminal part of its protein substrates and unfolds these before they are guided to HslV for hydrolysis. This chain is ATP-dependent protease ATPase subunit HslU, found in Rhizobium johnstonii (strain DSM 114642 / LMG 32736 / 3841) (Rhizobium leguminosarum bv. viciae).